We begin with the raw amino-acid sequence, 226 residues long: MNENLFASFATPTMMGLPIIMLIIMFPSILFPTPKRMITNRVVSVQQWLINMIMKQMMNIHNNKGRTWTLMLISLITFIGTTNLLGLLPHTFTPTTQLSMNLGMAIPLWAGAVVTGFRHKTKASLAHFLPQGTPIPLIPMLIIIQTISLFIQPMALAVRLTANITAGHLLIHLIGGATLALMSISPTTASITFIILILLTILEFAVALIQAYVFTLLVSLYLHDNT.

The next 6 helical transmembrane spans lie at P12–P32, W68–L88, Q97–F117, I138–V158, I164–I184, and A189–I209.

It belongs to the ATPase A chain family. In terms of assembly, component of the ATP synthase complex composed at least of ATP5F1A/subunit alpha, ATP5F1B/subunit beta, ATP5MC1/subunit c (homooctomer), MT-ATP6/subunit a, MT-ATP8/subunit 8, ATP5ME/subunit e, ATP5MF/subunit f, ATP5MG/subunit g, ATP5MK/subunit k, ATP5MJ/subunit j, ATP5F1C/subunit gamma, ATP5F1D/subunit delta, ATP5F1E/subunit epsilon, ATP5PF/subunit F6, ATP5PB/subunit b, ATP5PD/subunit d, ATP5PO/subunit OSCP. ATP synthase complex consists of a soluble F(1) head domain (subunits alpha(3) and beta(3)) - the catalytic core - and a membrane F(0) domain - the membrane proton channel (subunits c, a, 8, e, f, g, k and j). These two domains are linked by a central stalk (subunits gamma, delta, and epsilon) rotating inside the F1 region and a stationary peripheral stalk (subunits F6, b, d, and OSCP). Interacts with DNAJC30; interaction is direct.

The protein localises to the mitochondrion inner membrane. It catalyses the reaction H(+)(in) = H(+)(out). Subunit a, of the mitochondrial membrane ATP synthase complex (F(1)F(0) ATP synthase or Complex V) that produces ATP from ADP in the presence of a proton gradient across the membrane which is generated by electron transport complexes of the respiratory chain. ATP synthase complex consist of a soluble F(1) head domain - the catalytic core - and a membrane F(1) domain - the membrane proton channel. These two domains are linked by a central stalk rotating inside the F(1) region and a stationary peripheral stalk. During catalysis, ATP synthesis in the catalytic domain of F(1) is coupled via a rotary mechanism of the central stalk subunits to proton translocation. With the subunit c (ATP5MC1), forms the proton-conducting channel in the F(0) domain, that contains two crucial half-channels (inlet and outlet) that facilitate proton movement from the mitochondrial intermembrane space (IMS) into the matrix. Protons are taken up via the inlet half-channel and released through the outlet half-channel, following a Grotthuss mechanism. The polypeptide is ATP synthase F(0) complex subunit a (Dasypus novemcinctus (Nine-banded armadillo)).